The following is a 222-amino-acid chain: Germin-like protein subfamily 1 member 20 (222 aa).

The signal sequence occupies residues Met-1–Ala-22. Cysteines 32 and 48 form a disulfide. In terms of domain architecture, Cupin type-1 spans Ser-62 to Lys-213. N-linked (GlcNAc...) asparagine glycosylation occurs at Asn-77. Positions 110, 112, 117, and 159 each coordinate Mn(2+).

Belongs to the germin family. As to quaternary structure, oligomer (believed to be a pentamer but probably hexamer). In terms of tissue distribution, expressed in stems and developing embryos.

The protein localises to the secreted. It is found in the extracellular space. The protein resides in the apoplast. In terms of biological role, may play a role in plant defense. Probably has no oxalate oxidase activity even if the active site is conserved. The chain is Germin-like protein subfamily 1 member 20 (GLP5A) from Arabidopsis thaliana (Mouse-ear cress).